A 554-amino-acid polypeptide reads, in one-letter code: Terpene synthase 17 (554 aa).

Positions 306, 310, and 458 each coordinate Mg(2+). The short motif at 306–310 (DDTYD) is the DDXXD motif element.

Belongs to the terpene synthase family. Tpsa subfamily. It depends on Mg(2+) as a cofactor. Mn(2+) serves as cofactor.

The enzyme catalyses (2E,6E)-farnesyl diphosphate = (+)-valencene + diphosphate. The catalysed reaction is (2E,6E)-farnesyl diphosphate = (E)-beta-farnesene + diphosphate. It catalyses the reaction (2E,6E)-farnesyl diphosphate = gamma-gurjunene + diphosphate. It carries out the reaction (2Z,6Z)-farnesyl diphosphate = beta-bisabolene + diphosphate. The enzyme catalyses (2Z,6Z)-farnesyl diphosphate = (E)-gamma-bisabolene + diphosphate. The catalysed reaction is (2E)-geranyl diphosphate = limonene + diphosphate. It catalyses the reaction (2E)-geranyl diphosphate = beta-myrcene + diphosphate. It carries out the reaction (2E)-geranyl diphosphate = (E)-beta-ocimene + diphosphate. The enzyme catalyses (2E)-geranyl diphosphate = terpinolene + diphosphate. The catalysed reaction is (2E)-geranyl diphosphate = gamma-terpinene + diphosphate. It catalyses the reaction (2Z,6Z)-farnesyl diphosphate = (Z)-gamma-bisabolene + diphosphate. It carries out the reaction (2E,6E)-farnesyl diphosphate = (1S,5S,6R)-alpha-bergamotene + diphosphate. The enzyme catalyses (2Z,6Z)-farnesyl diphosphate = (1S,5S,6S)-alpha-bergamotene + diphosphate. It participates in secondary metabolite biosynthesis; terpenoid biosynthesis. Functionally, sesquiterpene synthase involved in the biosynthesis of volatile compounds. Mediates the conversion of (2E,6E)-farnesyl diphosphate (FPP) into gamma-gurjunene, (E)-beta-farnesene and (+)-valencene, and of (2Z,6Z)-farnesyl diphosphate ((ZZ)-FPP) into (E)-alpha-bergamotene and (Z)-gamma-bisabolene as well as beta-bisabolene, (Z)-alpha-bergamotene and (E)-gamma-bisabolene to a lower extent. Can act with a low efficiency as a monoterpene synthase with geranyl diphosphate (GPP) as substrate, thus producing beta-myrcene, (E)-beta-ocimene, limonene, terpinolene, gamma-terpinene and (Z)-beta-ocimene. The sequence is that of Terpene synthase 17 from Solanum habrochaites (Wild tomato).